The following is a 1102-amino-acid chain: Carbamoyl phosphate synthase large chain (1102 aa).

Positions 1 to 408 (MPKRTDIQSV…AFQKALRSLE (408 aa)) are carboxyphosphate synthetic domain. The ATP site is built by Arg-129, Arg-175, Gly-181, Gly-182, Glu-214, Ile-216, Glu-221, Gly-247, Val-248, His-249, Gln-291, and Glu-305. The ATP-grasp 1 domain occupies 137–334 (EEVRKKIGHG…IAKIAAKLAV (198 aa)). Mg(2+)-binding residues include Gln-291, Glu-305, and Asn-307. The Mn(2+) site is built by Gln-291, Glu-305, and Asn-307. Residues 409–551 (KKGSQFTFVG…YFYSSYDEES (143 aa)) form an oligomerization domain region. The interval 552-954 (EVAPREKPAV…AYAKSQAGAY (403 aa)) is carbamoyl phosphate synthetic domain. The ATP-grasp 2 domain occupies 682-873 (GRVLAEAGLP…LAKAAARISL (192 aa)). Residues Arg-718, Arg-757, Leu-759, Glu-764, Gly-789, Ile-790, His-791, Ser-792, Gln-832, and Glu-844 each contribute to the ATP site. Residues Gln-832, Glu-844, and Asn-846 each contribute to the Mg(2+) site. Gln-832, Glu-844, and Asn-846 together coordinate Mn(2+). The region spanning 955-1100 (GPLPTKGRAF…QEHAAFLIAA (146 aa)) is the MGS-like domain. The allosteric domain stretch occupies residues 955 to 1102 (GPLPTKGRAF…HAAFLIAARD (148 aa)).

Belongs to the CarB family. Composed of two chains; the small (or glutamine) chain promotes the hydrolysis of glutamine to ammonia, which is used by the large (or ammonia) chain to synthesize carbamoyl phosphate. Tetramer of heterodimers (alpha,beta)4. Mg(2+) is required as a cofactor. Requires Mn(2+) as cofactor.

The enzyme catalyses hydrogencarbonate + L-glutamine + 2 ATP + H2O = carbamoyl phosphate + L-glutamate + 2 ADP + phosphate + 2 H(+). It catalyses the reaction hydrogencarbonate + NH4(+) + 2 ATP = carbamoyl phosphate + 2 ADP + phosphate + 2 H(+). Its pathway is amino-acid biosynthesis; L-arginine biosynthesis; carbamoyl phosphate from bicarbonate: step 1/1. The protein operates within pyrimidine metabolism; UMP biosynthesis via de novo pathway; (S)-dihydroorotate from bicarbonate: step 1/3. Functionally, large subunit of the glutamine-dependent carbamoyl phosphate synthetase (CPSase). CPSase catalyzes the formation of carbamoyl phosphate from the ammonia moiety of glutamine, carbonate, and phosphate donated by ATP, constituting the first step of 2 biosynthetic pathways, one leading to arginine and/or urea and the other to pyrimidine nucleotides. The large subunit (synthetase) binds the substrates ammonia (free or transferred from glutamine from the small subunit), hydrogencarbonate and ATP and carries out an ATP-coupled ligase reaction, activating hydrogencarbonate by forming carboxy phosphate which reacts with ammonia to form carbamoyl phosphate. The protein is Carbamoyl phosphate synthase large chain of Streptomyces coelicolor (strain ATCC BAA-471 / A3(2) / M145).